We begin with the raw amino-acid sequence, 209 residues long: Small ribosomal subunit protein uS4 (209 aa).

The S4 RNA-binding domain occupies 98-161 (ARLDNVVYRM…RDLEVIKKAV (64 aa)).

This sequence belongs to the universal ribosomal protein uS4 family. As to quaternary structure, part of the 30S ribosomal subunit. Contacts protein S5. The interaction surface between S4 and S5 is involved in control of translational fidelity.

One of the primary rRNA binding proteins, it binds directly to 16S rRNA where it nucleates assembly of the body of the 30S subunit. Its function is as follows. With S5 and S12 plays an important role in translational accuracy. This Thermotoga petrophila (strain ATCC BAA-488 / DSM 13995 / JCM 10881 / RKU-1) protein is Small ribosomal subunit protein uS4.